Consider the following 361-residue polypeptide: Histidinol-phosphate aminotransferase (361 aa).

Lysine 218 is modified (N6-(pyridoxal phosphate)lysine).

This sequence belongs to the class-II pyridoxal-phosphate-dependent aminotransferase family. Histidinol-phosphate aminotransferase subfamily. In terms of assembly, homodimer. It depends on pyridoxal 5'-phosphate as a cofactor.

The catalysed reaction is L-histidinol phosphate + 2-oxoglutarate = 3-(imidazol-4-yl)-2-oxopropyl phosphate + L-glutamate. The protein operates within amino-acid biosynthesis; L-histidine biosynthesis; L-histidine from 5-phospho-alpha-D-ribose 1-diphosphate: step 7/9. The polypeptide is Histidinol-phosphate aminotransferase (Ruegeria pomeroyi (strain ATCC 700808 / DSM 15171 / DSS-3) (Silicibacter pomeroyi)).